Consider the following 293-residue polypeptide: AKT-interacting protein homolog A (293 aa).

Polar residues predominate over residues 1 to 11 (MNPFWNMSSAS). The disordered stretch occupies residues 1-45 (MNPFWNMSSASVRKRSENDEKISTGDQKISPPRSSSAKKQLPPIP). Residues 14 to 23 (KRSENDEKIS) are compositionally biased toward basic and acidic residues. Positions 24-38 (TGDQKISPPRSSSAK) are enriched in polar residues. Residues 75–223 (YLEYSLLAEF…VVDSVKLCNS (149 aa)) enclose the UBC core domain. Over residues 256–266 (AQKKKSEEQSK) the composition is skewed to basic and acidic residues. The interval 256–293 (AQKKKSEEQSKGLHVSGLSWVKPGSVLPFSKEENSLQT) is disordered.

It belongs to the ubiquitin-conjugating enzyme family. FTS subfamily.

The protein localises to the cytoplasm. The protein resides in the cell membrane. Its function is as follows. May function to promote vesicle trafficking and/or fusion. May also regulate apoptosis. In Xenopus laevis (African clawed frog), this protein is AKT-interacting protein homolog A (aktip-a).